The chain runs to 447 residues: MNSSKTTICALASSVGKGGIGIVRVSGPLCKVIAKKMLGFIPKPRYAYYGLFFDQESTEIDKGIALFFPKPYSFTGEDVLEFQGHGGMIGMRLLLESAISMGAKLAESGEFSKRSFLNGKMDLVQAEAISDMINANSKRASKSAFRSLSGDFSNQINGLTKSIIELRVFVEATIDFSDEEIDFLQFDQVKCKIKDIKQTIETILKSATQGIILREGLNVAIAGKPNAGKSSLLNALTQESSAIVTDIAGTTRDVLKETIHVNGVPLSIIDTAGLRNSHDKIEKEGIKRANFEIEHADVVLMVFDAQDDKPDLSILPKNINDQSLLLIKNKVDLTSGAIKREVINDIVQLSVSAKYSEGIKLLRKELSNISGLEDLSEGVVLARRRHIIALEASLVSIGNAIMQLEIGAIELMAEDLRFAGQFMGSITGEFSSDDLLDEIFSSFCIGK.

Residues Arg24, Glu81, and Lys120 each contribute to the (6S)-5-formyl-5,6,7,8-tetrahydrofolate site. A TrmE-type G domain is found at 216-371 (GLNVAIAGKP…LRKELSNISG (156 aa)). Asn226 is a binding site for K(+). Residues 226–231 (NAGKSS), 245–251 (TDIAGTT), and 270–273 (DTAG) each bind GTP. Ser230 is a Mg(2+) binding site. Thr245, Ile247, and Thr250 together coordinate K(+). Thr251 contributes to the Mg(2+) binding site. Lys447 provides a ligand contact to (6S)-5-formyl-5,6,7,8-tetrahydrofolate.

The protein belongs to the TRAFAC class TrmE-Era-EngA-EngB-Septin-like GTPase superfamily. TrmE GTPase family. As to quaternary structure, homodimer. Heterotetramer of two MnmE and two MnmG subunits. K(+) is required as a cofactor.

Its subcellular location is the cytoplasm. Functionally, exhibits a very high intrinsic GTPase hydrolysis rate. Involved in the addition of a carboxymethylaminomethyl (cmnm) group at the wobble position (U34) of certain tRNAs, forming tRNA-cmnm(5)s(2)U34. The sequence is that of tRNA modification GTPase MnmE from Vesicomyosocius okutanii subsp. Calyptogena okutanii (strain HA).